The chain runs to 195 residues: Protein lin-28 homolog A (195 aa).

The CSD domain occupies 33 to 106; sequence QGSGVCKWFN…GLESTRVTGP (74 aa). The disordered stretch occupies residues 98 to 126; that stretch reads LESTRVTGPGGAPCIGSERRPKVKGQQKR. The flexible linker stretch occupies residues 107–130; that stretch reads GGAPCIGSERRPKVKGQQKRRQKG. 2 consecutive CCHC-type zinc fingers follow at residues 131–148 and 153–170; these read DRCY…ECKL and KKCH…QCPA. Residues cysteine 133, cysteine 136, histidine 141, cysteine 146, cysteine 155, cysteine 158, histidine 163, and cysteine 168 each coordinate Zn(2+). The tract at residues 175-195 is disordered; it reads AANLEEQPISEEQELIPETME. Over residues 182-195 the composition is skewed to acidic residues; sequence PISEEQELIPETME.

The protein belongs to the lin-28 family. Monomer.

Its subcellular location is the cytoplasm. The protein localises to the rough endoplasmic reticulum. It is found in the P-body. The protein resides in the stress granule. It localises to the nucleus. Its subcellular location is the nucleolus. In terms of biological role, RNA-binding protein that inhibits processing of pre-let-7 miRNAs and regulates translation of mRNAs that control developmental timing, pluripotency and metabolism. Seems to recognize a common structural G-quartet (G4) feature in its miRNA and mRNA targets. 'Translational enhancer' that drives specific mRNAs to polysomes and increases the efficiency of protein synthesis. Its association with the translational machinery and target mRNAs results in an increased number of initiation events per molecule of mRNA and, indirectly, in mRNA stabilization. Suppressor of microRNA (miRNA) biogenesis, including that of let-7. Binds specific target miRNA precursors (pre-miRNAs), recognizing an 5'-GGAG-3' motif found in their terminal loop, and recruits uridylyltransferase. This results in the terminal uridylation of target pre-miRNAs. Uridylated pre-miRNAs fail to be processed by Dicer and undergo degradation. Localized to the periendoplasmic reticulum area, binds to a large number of spliced mRNAs and inhibits the translation of mRNAs destined for the ER, reducing the synthesis of transmembrane proteins, ER or Golgi lumen proteins, and secretory proteins. Binds to and enhances the translation of mRNAs for several metabolic enzymes, increasing glycolysis and oxidative phosphorylation. Which, with the let-7 repression may enhance tissue repair in adult tissue. This chain is Protein lin-28 homolog A (lin28a), found in Xenopus tropicalis (Western clawed frog).